Reading from the N-terminus, the 279-residue chain is DegV domain-containing protein SP_1112 (279 aa).

Residues 4 to 277 (IKIVTDSSVT…ENAWAILIRY (274 aa)) form the DegV domain. Hexadecanoate is bound by residues T62 and S94.

In terms of biological role, may bind long-chain fatty acids, such as palmitate, and may play a role in lipid transport or fatty acid metabolism. This is DegV domain-containing protein SP_1112 from Streptococcus pneumoniae serotype 4 (strain ATCC BAA-334 / TIGR4).